The sequence spans 460 residues: MSNNNFKDDFEKNRQSINPDEHQTELKEDDKTNENKKEADSQNSLSNNSNQQFPPRNAQRRKRRRETATNQSKQQDDKHQKNSDAKTTEGSLDDRYDEAQLQQQHDKSQQQNKTEKQSQDNRMKDGKDAAIVNGTSESPEHKSKSTQNRPGPKAQQQKRKSESTQSKPSTNKDKKAATGAGIAGAAGVAGAAETSKRHHNKKDKQDSKHSNHENDEKSVKNDDQKQSKKGKKAAVGAGAAAGVGAAGVAHHNNQNKHHNEEKNSNQNNQYNDQSEGKKKGGFMKILLPLIAAILILGAIAIFGGMALNNHNDSKSDDQKIANQSKKDSDKKDGAQSEDNKDKKSDSNKDKKSDSDKNADDDSDNSSSNPNATSTNNNDNVANNNSNYTNQNQQDNANQNSNNQQATQGQQSHTVYGQENLYRIAIQYYGEGTQANVDKIKRANGLSSNNIHNGQTLVIPQ.

A compositionally biased stretch (basic and acidic residues) spans 1–40 (MSNNNFKDDFEKNRQSINPDEHQTELKEDDKTNENKKEAD). Residues 1–277 (MSNNNFKDDF…NQYNDQSEGK (277 aa)) form a disordered region. The segment covering 41–57 (SQNSLSNNSNQQFPPRN) has biased composition (low complexity). Over residues 74 to 128 (QQDDKHQKNSDAKTTEGSLDDRYDEAQLQQQHDKSQQQNKTEKQSQDNRMKDGKD) the composition is skewed to basic and acidic residues. Residues 177–192 (ATGAGIAGAAGVAGAA) are compositionally biased toward low complexity. The span at 203–226 (DKQDSKHSNHENDEKSVKNDDQKQ) shows a compositional bias: basic and acidic residues. Residues 264-273 (SNQNNQYNDQ) are compositionally biased toward low complexity. Residues 285-305 (ILLPLIAAILILGAIAIFGGM) form a helical membrane-spanning segment. A compositionally biased stretch (basic and acidic residues) spans 313–359 (SKSDDQKIANQSKKDSDKKDGAQSEDNKDKKSDSNKDKKSDSDKNAD). The disordered stretch occupies residues 313–411 (SKSDDQKIAN…NQQATQGQQS (99 aa)). Over residues 364-411 (NSSSNPNATSTNNNDNVANNNSNYTNQNQQDNANQNSNNQQATQGQQS) the composition is skewed to low complexity. Positions 410–458 (QSHTVYGQENLYRIAIQYYGEGTQANVDKIKRANGLSSNNIHNGQTLVI) constitute a LysM domain.

The protein localises to the cell membrane. This is Probable elastin-binding protein EbpS (ebpS) from Staphylococcus epidermidis (strain ATCC 35984 / DSM 28319 / BCRC 17069 / CCUG 31568 / BM 3577 / RP62A).